A 175-amino-acid polypeptide reads, in one-letter code: Protein GrpE (175 aa).

The disordered stretch occupies residues 1–35 (MSEQKQEIENENAQNSENLQDDLQDNEKNETNELQ). The span at 25 to 35 (DNEKNETNELQ) shows a compositional bias: basic and acidic residues.

The protein belongs to the GrpE family. As to quaternary structure, homodimer.

The protein localises to the cytoplasm. Functionally, participates actively in the response to hyperosmotic and heat shock by preventing the aggregation of stress-denatured proteins, in association with DnaK and GrpE. It is the nucleotide exchange factor for DnaK and may function as a thermosensor. Unfolded proteins bind initially to DnaJ; upon interaction with the DnaJ-bound protein, DnaK hydrolyzes its bound ATP, resulting in the formation of a stable complex. GrpE releases ADP from DnaK; ATP binding to DnaK triggers the release of the substrate protein, thus completing the reaction cycle. Several rounds of ATP-dependent interactions between DnaJ, DnaK and GrpE are required for fully efficient folding. The protein is Protein GrpE of Campylobacter jejuni (strain RM1221).